Here is a 325-residue protein sequence, read N- to C-terminus: S-adenosylmethionine carrier 1, chloroplastic/mitochondrial (325 aa).

A chloroplast and mitochondrion-targeting transit peptide spans 1 to 38 (MAPLTLSVDVKSSSATSHDVSKRVMQSSQLKINKGFFA). Solcar repeat units follow at residues 52–124 (RTLF…TKQK), 133–215 (LSAV…LCLG), and 228–310 (ENAL…TKRT). Helical transmembrane passes span 55 to 75 (FEGFIAGGTAGVVVETALYPI), 97 to 117 (YSGLAGNIAGVLPASALFVGV), 132 to 152 (HLSAVAHLTAGAIGGLAASLI), 230 to 250 (ALIGAFAGALTGAVTTPLDVI), and 285 to 305 (GIGPRVLWIGIGGSIFFGVLE).

This sequence belongs to the mitochondrial carrier (TC 2.A.29) family. As to expression, expressed in seedlings, cotyledons, leaves and flowers. Lower levels of expression in stems and roots. Not detected in senescent leaves, petals and pollen grains.

The protein resides in the mitochondrion membrane. Its subcellular location is the plastid. The protein localises to the chloroplast membrane. With respect to regulation, inhibited strongly by tannic acid, bromocresol purple, mercuric chloride, mersalyl, p-hydroxymercuribenzoate, S-adenosylhomocysteine, S-adenosylcysteine and adenosylornithine, and to a lesser extent by N-ethylmaleimide, bathophenanthroline and pyridoxal-5'-P. Functionally, transporter involved in exchange reactions through membranes. Has a low uniporter activity. Specifically mediates the transport of S-adenosylmethionine (SAM) and its closest analogs. Probably involved in the uptake of SAM in exchange for S-adenosylhomocysteine (SAHC), which is produced from SAM in the mitochondrial matrix and plastidial stroma by methyltransferase activities. The sequence is that of S-adenosylmethionine carrier 1, chloroplastic/mitochondrial (SAMC1) from Arabidopsis thaliana (Mouse-ear cress).